The chain runs to 74 residues: uncharacterized protein (74 aa).

A helical transmembrane segment spans residues 8-30; sequence LAAAVSSSAASAGVSRIAASAMA.

Its subcellular location is the mitochondrion outer membrane. This is an uncharacterized protein from Saccharomyces cerevisiae (strain ATCC 204508 / S288c) (Baker's yeast).